The primary structure comprises 601 residues: Peptide transporter PTR2 (601 aa).

Over residues 1–10 (MLNHPSQGSD) the composition is skewed to polar residues. The interval 1–66 (MLNHPSQGSD…DEDFEGPTEE (66 aa)) is disordered. Topologically, residues 1–150 (MLNHPSQGSD…PVFGGYVADT (150 aa)) are extracellular. The span at 14 to 28 (DEKQGDFPVIEEEKT) shows a compositional bias: basic and acidic residues. Tyrosine 37 bears the Phosphotyrosine mark. A phosphoserine mark is found at serine 39 and serine 45. Over residues 42–53 (VANSTERYNLSP) the composition is skewed to polar residues. Positions 55–66 (PEDEDFEGPTEE) are enriched in acidic residues. A helical membrane pass occupies residues 151-172 (FWGKYNTICCGTAIYIAGIFIL). Residues 173–182 (FITSIPSVGN) lie on the Cytoplasmic side of the membrane. A helical transmembrane segment spans residues 183–202 (RDSAIGGFIAAIILIGIATG). Topologically, residues 203 to 210 (MIKANLSV) are extracellular. Residues 211–229 (LIADQLPKRKPSIKVLKSG) form a helical membrane-spanning segment. Residues 230–267 (ERVIVDSNITLQNVFMFFYFMINVGSLSLMATTELEYH) are Cytoplasmic-facing. A helical membrane pass occupies residues 268-287 (KGFWAAYLLPFCFFWIAVVT). At 288-294 (LIFGKKQ) the chain is on the extracellular side. A helical membrane pass occupies residues 295 to 316 (YIQRPIGDKVIAKSFKVCWILT). At 317–378 (KNKFDFNAAK…ISSFITQASM (62 aa)) the chain is on the cytoplasmic side. The chain crosses the membrane as a helical span at residues 379 to 399 (MELHGIPNDFLQAFDSIALII). At 400-412 (FIPIFEKFVYPFI) the chain is on the extracellular side. The helical transmembrane segment at 413-429 (RRYTPLKPITKIFFGFM) threads the bilayer. At 430–448 (FGSFAMTWAAVLQSFVYKA) the chain is on the cytoplasmic side. Residues 449–466 (GPWYNEPLGHNTPNHVHV) form a helical membrane-spanning segment. Topologically, residues 467 to 494 (CWQIPAYVLISFSEIFASITGLEYAYSK) are extracellular. Residues 495-513 (APASMKSFIMSIFLLTNAF) traverse the membrane as a helical segment. Residues 514–526 (GSAIGCALSPVTV) lie on the Cytoplasmic side of the membrane. The helical transmembrane segment at 527 to 547 (DPKFTWLFTGLAVACFISGCL) threads the bilayer. At 548–554 (FWLCFRK) the chain is on the extracellular side. Residues 555-577 (YNDTEEEMNAMDYEEEDEFDLNP) form a helical membrane-spanning segment. Residues 578 to 601 (ISAPKANDIEILEPMESLRSTTKY) are Cytoplasmic-facing. A Phosphoserine modification is found at serine 594.

This sequence belongs to the major facilitator superfamily. Proton-dependent oligopeptide transporter (POT/PTR) (TC 2.A.17) family.

The protein localises to the membrane. In terms of biological role, uptake of small peptides. This chain is Peptide transporter PTR2 (PTR2), found in Saccharomyces cerevisiae (strain ATCC 204508 / S288c) (Baker's yeast).